A 141-amino-acid polypeptide reads, in one-letter code: MNYDETNNELFQESNMQELKYGERNILEGELITFPNPRIGRRYEINISLPEFTCKCPFSGYPDFATIHIKYIPNERVVELKAIKLYINSYRERYISHEESVNQILDDFVAACDPLEVKIKGDFLPRGNVHTTIEVEHYKAS.

The active-site Thioimide intermediate is Cys-56. The active-site Proton donor is the Asp-63. Substrate is bound by residues 78–80 (VEL) and 97–98 (HE).

Belongs to the GTP cyclohydrolase I family. QueF type 1 subfamily.

It is found in the cytoplasm. It carries out the reaction 7-aminomethyl-7-carbaguanine + 2 NADP(+) = 7-cyano-7-deazaguanine + 2 NADPH + 3 H(+). Its pathway is tRNA modification; tRNA-queuosine biosynthesis. Its function is as follows. Catalyzes the NADPH-dependent reduction of 7-cyano-7-deazaguanine (preQ0) to 7-aminomethyl-7-deazaguanine (preQ1). This chain is NADPH-dependent 7-cyano-7-deazaguanine reductase, found in Trichodesmium erythraeum (strain IMS101).